Reading from the N-terminus, the 485-residue chain is Predicted GPI-anchored protein 27 (485 aa).

The first 20 residues, 1–20 (MHFTSSLLATLIWFTLPVQS), serve as a signal peptide directing secretion. Residues Asn-30, Asn-86, Asn-96, and Asn-444 are each glycosylated (N-linked (GlcNAc...) asparagine). The GPI-anchor amidated glycine moiety is linked to residue Gly-467. Residues 468–485 (LVLVSSGVLLGTCLLFIL) constitute a propeptide, removed in mature form.

The protein localises to the cell membrane. This is Predicted GPI-anchored protein 27 (PGA27) from Candida albicans (strain SC5314 / ATCC MYA-2876) (Yeast).